The sequence spans 497 residues: ATP synthase subunit alpha 2 (497 aa).

Residue 167–174 (GERATGKT) coordinates ATP.

The protein belongs to the ATPase alpha/beta chains family. F-type ATPases have 2 components, CF(1) - the catalytic core - and CF(0) - the membrane proton channel. CF(1) has five subunits: alpha(3), beta(3), gamma(1), delta(1), epsilon(1). CF(0) has four main subunits: a(1), b(1), b'(1) and c(9-12).

The protein resides in the cell inner membrane. It catalyses the reaction ATP + H2O + 4 H(+)(in) = ADP + phosphate + 5 H(+)(out). In terms of biological role, produces ATP from ADP in the presence of a proton gradient across the membrane. The alpha chain is a regulatory subunit. This is ATP synthase subunit alpha 2 from Cereibacter sphaeroides (strain ATCC 17023 / DSM 158 / JCM 6121 / CCUG 31486 / LMG 2827 / NBRC 12203 / NCIMB 8253 / ATH 2.4.1.) (Rhodobacter sphaeroides).